Consider the following 105-residue polypeptide: Large ribosomal subunit protein uL24 (105 aa).

It belongs to the universal ribosomal protein uL24 family. In terms of assembly, part of the 50S ribosomal subunit.

Its function is as follows. One of two assembly initiator proteins, it binds directly to the 5'-end of the 23S rRNA, where it nucleates assembly of the 50S subunit. One of the proteins that surrounds the polypeptide exit tunnel on the outside of the subunit. This Xylella fastidiosa (strain M23) protein is Large ribosomal subunit protein uL24.